The sequence spans 247 residues: 1-(5-phosphoribosyl)-5-[(5-phosphoribosylamino)methylideneamino] imidazole-4-carboxamide isomerase (247 aa).

The active-site Proton acceptor is Asp8. The active-site Proton donor is Asp129.

This sequence belongs to the HisA/HisF family.

The protein localises to the cytoplasm. It catalyses the reaction 1-(5-phospho-beta-D-ribosyl)-5-[(5-phospho-beta-D-ribosylamino)methylideneamino]imidazole-4-carboxamide = 5-[(5-phospho-1-deoxy-D-ribulos-1-ylimino)methylamino]-1-(5-phospho-beta-D-ribosyl)imidazole-4-carboxamide. Its pathway is amino-acid biosynthesis; L-histidine biosynthesis; L-histidine from 5-phospho-alpha-D-ribose 1-diphosphate: step 4/9. The protein is 1-(5-phosphoribosyl)-5-[(5-phosphoribosylamino)methylideneamino] imidazole-4-carboxamide isomerase of Rhodospirillum centenum (strain ATCC 51521 / SW).